The sequence spans 756 residues: 5-methyltetrahydropteroyltriglutamate--homocysteine methyltransferase (756 aa).

5-methyltetrahydropteroyltri-L-glutamate contacts are provided by residues 16–19 (RELK) and Lys116. L-homocysteine is bound by residues 433–435 (IGS) and Glu486. Residues 433-435 (IGS) and Glu486 each bind L-methionine. 5-methyltetrahydropteroyltri-L-glutamate is bound by residues 517 to 518 (RC) and Trp563. Residue Asp601 participates in L-homocysteine binding. Asp601 is an L-methionine binding site. Glu607 is a binding site for 5-methyltetrahydropteroyltri-L-glutamate. Residues His643, Cys645, and Glu667 each contribute to the Zn(2+) site. His696 acts as the Proton donor in catalysis. Position 728 (Cys728) interacts with Zn(2+).

The protein belongs to the vitamin-B12 independent methionine synthase family. The cofactor is Zn(2+).

It carries out the reaction 5-methyltetrahydropteroyltri-L-glutamate + L-homocysteine = tetrahydropteroyltri-L-glutamate + L-methionine. It functions in the pathway amino-acid biosynthesis; L-methionine biosynthesis via de novo pathway; L-methionine from L-homocysteine (MetE route): step 1/1. Functionally, catalyzes the transfer of a methyl group from 5-methyltetrahydrofolate to homocysteine resulting in methionine formation. This Buchnera aphidicola subsp. Baizongia pistaciae (strain Bp) protein is 5-methyltetrahydropteroyltriglutamate--homocysteine methyltransferase.